The sequence spans 79 residues: Acyl carrier protein (79 aa).

The Carrier domain occupies 2 to 77 (SEIGERVKKI…DATKFLEKNA (76 aa)). Residue serine 37 is modified to O-(pantetheine 4'-phosphoryl)serine.

This sequence belongs to the acyl carrier protein (ACP) family. Post-translationally, 4'-phosphopantetheine is transferred from CoA to a specific serine of apo-ACP by AcpS. This modification is essential for activity because fatty acids are bound in thioester linkage to the sulfhydryl of the prosthetic group.

Its subcellular location is the cytoplasm. It participates in lipid metabolism; fatty acid biosynthesis. Carrier of the growing fatty acid chain in fatty acid biosynthesis. This chain is Acyl carrier protein, found in Nitrobacter winogradskyi (strain ATCC 25391 / DSM 10237 / CIP 104748 / NCIMB 11846 / Nb-255).